A 479-amino-acid chain; its full sequence is Aspartyl/glutamyl-tRNA(Asn/Gln) amidotransferase subunit B (479 aa).

It belongs to the GatB/GatE family. GatB subfamily. Heterotrimer of A, B and C subunits.

The enzyme catalyses L-glutamyl-tRNA(Gln) + L-glutamine + ATP + H2O = L-glutaminyl-tRNA(Gln) + L-glutamate + ADP + phosphate + H(+). The catalysed reaction is L-aspartyl-tRNA(Asn) + L-glutamine + ATP + H2O = L-asparaginyl-tRNA(Asn) + L-glutamate + ADP + phosphate + 2 H(+). Its function is as follows. Allows the formation of correctly charged Asn-tRNA(Asn) or Gln-tRNA(Gln) through the transamidation of misacylated Asp-tRNA(Asn) or Glu-tRNA(Gln) in organisms which lack either or both of asparaginyl-tRNA or glutaminyl-tRNA synthetases. The reaction takes place in the presence of glutamine and ATP through an activated phospho-Asp-tRNA(Asn) or phospho-Glu-tRNA(Gln). The protein is Aspartyl/glutamyl-tRNA(Asn/Gln) amidotransferase subunit B of Mycoplasma capricolum subsp. capricolum (strain California kid / ATCC 27343 / NCTC 10154).